The sequence spans 37 residues: Photosystem I reaction center subunit VIII (37 aa).

The chain crosses the membrane as a helical span at residues 9–29; that stretch reads SIFVPLVGLVFPAIAMASLFL.

The protein belongs to the PsaI family.

Its subcellular location is the plastid. It localises to the chloroplast thylakoid membrane. Functionally, may help in the organization of the PsaL subunit. In Cucumis sativus (Cucumber), this protein is Photosystem I reaction center subunit VIII.